A 300-amino-acid chain; its full sequence is 2-methylisocitrate lyase (300 aa).

Residue 53-55 participates in substrate binding; that stretch reads SGD. Positions 92 and 94 each coordinate Mg(2+). Residues 129-130, R162, E192, 214-216, R245, and R274 each bind substrate; these read CG and NMT.

The protein belongs to the isocitrate lyase/PEP mutase superfamily. Methylisocitrate lyase family. Mg(2+) serves as cofactor.

It catalyses the reaction 3-hydroxybutane-1,2,3-tricarboxylate = pyruvate + succinate. Functionally, involved in the methylcitric acid cycle. Catalyzes the cleavage of 2-methylisocitrate to yield pyruvate and succinate. The protein is 2-methylisocitrate lyase of Halalkalibacterium halodurans (strain ATCC BAA-125 / DSM 18197 / FERM 7344 / JCM 9153 / C-125) (Bacillus halodurans).